A 323-amino-acid chain; its full sequence is tRNA U34 carboxymethyltransferase (323 aa).

Residues lysine 91, tryptophan 105, lysine 110, glycine 130, 152 to 154 (DPT), 181 to 182 (IE), methionine 196, tyrosine 200, and arginine 315 each bind carboxy-S-adenosyl-L-methionine.

This sequence belongs to the class I-like SAM-binding methyltransferase superfamily. CmoB family. As to quaternary structure, homotetramer.

It catalyses the reaction carboxy-S-adenosyl-L-methionine + 5-hydroxyuridine(34) in tRNA = 5-carboxymethoxyuridine(34) in tRNA + S-adenosyl-L-homocysteine + H(+). Functionally, catalyzes carboxymethyl transfer from carboxy-S-adenosyl-L-methionine (Cx-SAM) to 5-hydroxyuridine (ho5U) to form 5-carboxymethoxyuridine (cmo5U) at position 34 in tRNAs. The polypeptide is tRNA U34 carboxymethyltransferase (Salmonella typhi).